We begin with the raw amino-acid sequence, 285 residues long: tRNA pseudouridine synthase A (285 aa).

D64 (nucleophile) is an active-site residue. Residue Y125 coordinates substrate.

The protein belongs to the tRNA pseudouridine synthase TruA family. As to quaternary structure, homodimer.

It catalyses the reaction uridine(38/39/40) in tRNA = pseudouridine(38/39/40) in tRNA. Functionally, formation of pseudouridine at positions 38, 39 and 40 in the anticodon stem and loop of transfer RNAs. This is tRNA pseudouridine synthase A from Streptomyces avermitilis (strain ATCC 31267 / DSM 46492 / JCM 5070 / NBRC 14893 / NCIMB 12804 / NRRL 8165 / MA-4680).